The sequence spans 513 residues: Na(+)/H(+) antiporter NhaB (513 aa).

The next 12 helical transmembrane spans lie at 23–43 (LALI…PFVA), 52–72 (IFTL…LLAI), 97–117 (LLLM…LFIF), 120–140 (LLLS…AAAF), 144–164 (FLDA…FYGI), 202–222 (LMMH…VGEP), 238–258 (FFLR…LTCL), 303–323 (AIIG…VGLI), 348–368 (TESL…AVII), 391–411 (LFYI…VGTI), 447–467 (ATPN…APLI), and 475–495 (VWMA…CVEF).

It belongs to the NhaB Na(+)/H(+) (TC 2.A.34) antiporter family.

Its subcellular location is the cell inner membrane. The enzyme catalyses 2 Na(+)(in) + 3 H(+)(out) = 2 Na(+)(out) + 3 H(+)(in). Na(+)/H(+) antiporter that extrudes sodium in exchange for external protons. This Shigella flexneri serotype 5b (strain 8401) protein is Na(+)/H(+) antiporter NhaB.